Reading from the N-terminus, the 272-residue chain is MTLQEQIMKALHVQPVIDPKAEIRKRVDFLKDYVKKTGAKGFVLGISGGQDSTLAGRLAQLAVEEIRNEGGNATFIAVRLPYKVQKDEDDAQLALQFIQADQSVAFDIASTVDAFSNQYENLLDESLTDFNKGNVKARIRMVTQYAIGGQKGLLVIGTDHAAEAVTGFFTKFGDGGADLLPLTGLTKRQGRALLQELGADERLYLKMPTADLLDEKPGQADETELGITYDQLDDYLEGKTVPADVAEKIEKRYTVSEHKRQVPASMFDDWWK.

Residue 45 to 52 (GISGGQDS) participates in ATP binding. Residue D51 participates in Mg(2+) binding. Position 138 (R138) interacts with deamido-NAD(+). T158 lines the ATP pocket. A Mg(2+)-binding site is contributed by E163. Residues K171 and D178 each coordinate deamido-NAD(+). ATP contacts are provided by K187 and T209. 258–259 (HK) lines the deamido-NAD(+) pocket.

This sequence belongs to the NAD synthetase family. As to quaternary structure, homodimer.

The enzyme catalyses deamido-NAD(+) + NH4(+) + ATP = AMP + diphosphate + NAD(+) + H(+). It functions in the pathway cofactor biosynthesis; NAD(+) biosynthesis; NAD(+) from deamido-NAD(+) (ammonia route): step 1/1. Its function is as follows. Catalyzes the ATP-dependent amidation of deamido-NAD to form NAD. Uses ammonia as a nitrogen source. The polypeptide is NH(3)-dependent NAD(+) synthetase (Bacillus cereus (strain Q1)).